We begin with the raw amino-acid sequence, 115 residues long: Large ribosomal subunit protein uL22c (115 aa).

This sequence belongs to the universal ribosomal protein uL22 family. As to quaternary structure, part of the 50S ribosomal subunit.

It localises to the plastid. The protein resides in the chloroplast. In terms of biological role, this protein binds specifically to 23S rRNA. The globular domain of the protein is located near the polypeptide exit tunnel on the outside of the subunit, while an extended beta-hairpin is found that lines the wall of the exit tunnel in the center of the 70S ribosome. The chain is Large ribosomal subunit protein uL22c (rpl22) from Phaeodactylum tricornutum (strain CCAP 1055/1).